The chain runs to 648 residues: MEHIQGAWKTISNGFGLKDAVFDGSSCISPTIVQQFGYQRRASDDGKLTDSSKTSNTIRVFLPNKQRTVVNVRNGMSLHDCLMKALKVRGLQPECCAVFRLLQEHKGKKARLDWNTDAASLIGEELQVDFLDHVPLTTHNFARKTFLKLAFCDICQKFLLNGFRCQTCGYKFHEHCSTKVPTMCVDWSNIRQLLLFPNSTVGDSGVPAPPSFPMRRMRESVSRMPASSQHRYSTPHAFTFNTSSPSSEGSLSQRQRSTSTPNVHMVSTTLHVDSRMIEDAIRSHSESASPSALSSSPNNLSPTGWSQPKTPVPAQRERAPGSGTQEKNKIRPRGQRDSSYYWEIEASEVMLSTRIGSGSFGTVYKGKWHGDVAVKILKVVDPTPEQLQAFRNEVAVLRKTRHVNILLFMGYMTKDNLAIVTQWCEGSSLYKHLHVQETKFQMFQLIDIARQTAQGMDYLHAKNIIHRDMKSNNIFLHEGLTVKIGDFGLATVKSRWSGSQQVEQPTGSVLWMAPEVIRMQDDNPFSFQSDVYSYGIVLYELMAGELPYAHINNRDQIIFMVGRGYASPDLSRLYKNCPKAMKRLVADCVKKVKEERPLFPQILSSIELLQHSLPKINRSASEPSLHRAAHTEDINACTLTTSPRLPVF.

S29 carries the post-translational modification Phosphoserine; by MAPK1. Phosphoserine; by PKA and MAPK1 is present on S43. In terms of domain architecture, RBD spans 56–131 (NTIRVFLPNK…IGEELQVDFL (76 aa)). Residues 138–184 (THNFARKTFLKLAFCDICQKFLLNGFRCQTCGYKFHEHCSTKVPTMC) form a Phorbol-ester/DAG-type zinc finger. Zn(2+) is bound by residues H139, C152, C155, C165, C168, H173, C176, and C184. The tract at residues 205-265 (GVPAPPSFPM…RSTSTPNVHM (61 aa)) is disordered. S233 bears the Phosphoserine; by PKA mark. Polar residues predominate over residues 239–265 (TFNTSSPSSEGSLSQRQRSTSTPNVHM). S252 carries the phosphoserine modification. Residue S259 is modified to Phosphoserine; by PKA, PKC and PKB/AKT1. Position 268 is a phosphothreonine; by autocatalysis (T268). T269 carries the post-translational modification Phosphothreonine; by PKA. The segment at 281–335 (IRSHSESASPSALSSSPNNLSPTGWSQPKTPVPAQRERAPGSGTQEKNKIRPRGQ) is disordered. Over residues 286–301 (ESASPSALSSSPNNLS) the composition is skewed to low complexity. Phosphoserine; by MAPK1 is present on residues S289, S296, and S301. An interaction with PEBP1/RKIP region spans residues 331 to 349 (RPRGQRDSSYYWEIEASEV). At S338 the chain carries Phosphoserine; by PAK1, PAK2, PAK3 and PAK5. Phosphoserine; by PAK1, PAK2 and PAK3 is present on S339. Phosphotyrosine; by SRC occurs at positions 340 and 341. The region spanning 349-609 (VMLSTRIGSG…PQILSSIELL (261 aa)) is the Protein kinase domain. Residues 355–363 (IGSGSFGTV) and K375 each bind ATP. Catalysis depends on D468, which acts as the Proton acceptor. S471 bears the Phosphoserine mark. Phosphothreonine is present on T491. S494 is modified (phosphoserine). A phosphoserine; by PKC mark is found at S497 and S499. Position 563 is a symmetric dimethylarginine; by PRMT5 (R563). At S621 the chain carries Phosphoserine. Position 642 is a phosphoserine; by MAPK1 (S642).

Belongs to the protein kinase superfamily. TKL Ser/Thr protein kinase family. RAF subfamily. Monomer. Homodimer. Heterodimerizes with BRAF and this heterodimer possesses a highly increased kinase activity compared to the respective homodimers or monomers. Heterodimerization is mitogen-regulated and enhanced by 14-3-3 proteins. MAPK1/ERK2 activation can induce a negative feedback that promotes the dissociation of the heterodimer. Forms a multiprotein complex with Ras (M-Ras/MRAS), SHOC2 and protein phosphatase 1 (PPP1CA, PPP1CB and PPP1CC). Interacts with LZTR1. Interacts with Ras proteins; the interaction is antagonized by RIN1. Weakly interacts with RIT1. Interacts (via N-terminus) with RGS14 (via RBD domains); the interaction mediates the formation of a ternary complex with BRAF, a ternary complex inhibited by GNAI1. Probably forms a complex composed of chaperones HSP90 and HSP70, co-chaperones CDC37, PPP5C, TSC1 and client protein TSC2, CDK4, AKT, RAF1 and NR3C1; this complex does not contain co-chaperones STIP1/HOP and PTGES3/p23. Interacts with STK3/MST2; the interaction inhibits its pro-apoptotic activity. Interacts (when phosphorylated at Ser-259) with YWHAZ (unphosphorylated at 'Thr-232'). Interacts with MAP2K1/MEK1 and MAP2K2/MEK2. Interacts with MAP3K5/ASF1 (via N-terminus) and this interaction inhibits the proapoptotic function of MAP3K5/ASK1. Interacts with PAK1 (via kinase domain). The Ser-338 and Ser-339 phosphorylated form (by PAK1) interacts with BCL2. Interacts with PEBP1/RKIP and this interaction is enhanced if RAF1 is phosphorylated on residues Ser-338, Ser-339, Tyr-340 and Tyr-341. Interacts with ADCY2, ADCY5, ADCY6, DGKH, RCAN1/DSCR1, PPP1R12A, PKB/AKT1, SPRY2, SPRY4, CNKSR1/CNK1, KSR2 and PHB/prohibitin. The phosphorylated form interacts with PIN1. Interacts with PPP2CA, PPP2R1B and ROCK2. In its active form, interacts with PRMT5. Interacts with FAM83B; displaces 14-3-3 proteins from RAF1 and activates RAF1. Interacts with PDE8A; the interaction promotes RAF1 activity. Interacts with MFHAS1. Interacts with GLS. Interacts with NEK10 and MAP2K1; the interaction is direct with NEK10 and required for ERK1/2-signaling pathway activation in response to UV irradiation. It depends on Zn(2+) as a cofactor. Phosphorylation at Thr-269, Ser-338, Tyr-341, Thr-491 and Ser-494 results in its activation. Phosphorylation at Ser-29, Ser-43, Ser-289, Ser-296, Ser-301 and Ser-642 by MAPK1/ERK2 results in its inactivation. Phosphorylation at Ser-259 induces the interaction with YWHAZ and inactivates kinase activity. Dephosphorylation of Ser-259 by the SHOC2-MRAS-PP1c (SMP) complex consisting of SHOC2, GTP-bound M-Ras/MRAS and the catalytic subunit of protein phosphatase 1 (PPP1CA, PPP1CB or PPP1CC); this relieves inactivation and stimulates kinase activity. Phosphorylation at Ser-338 by PAK1 and PAK5 and Ser-339 by PAK1 is required for its mitochondrial localization. Phosphorylation at Ser-621 in response to growth factor treatment stabilizes the protein, possibly by preventing proteasomal degradation. Phosphorylation at Ser-289, Ser-296, Ser-301, Ser-338 and Ser-621 are somehow linked to the methylation potential of cells. Treatment of cells with HGF in the presence of the methylation inhibitor 5'-methylthioadenosine (MTA) results in increased phosphorylation at Ser-338 and Ser-621 and decreased phosphorylation at Ser-296, Ser-301 and Ser-338. Dephosphorylation at Ser-338 by PPP5C results in a decreased of activity. In terms of processing, methylated at Arg-563 in response to EGF treatment. This modification leads to destabilization of the protein, possibly through proteasomal degradation. Present in all tissues tested: testis, ovary, small intestine, colon, peripheral blood leukocytes, fetal liver, bone marrow, thymus, lymph node and spleen, and the cell lines melanoma G-361, lung carcinoma A-549, colorectal adenocarcinoma SW480, Burkitt's lymphoma Raji and lymphoblastic leukemia MOLT-4. In skeletal muscle, isoform 1 is more abundant than isoform 2.

Its subcellular location is the cytoplasm. The protein resides in the cell membrane. It is found in the mitochondrion. It localises to the nucleus. The enzyme catalyses L-seryl-[protein] + ATP = O-phospho-L-seryl-[protein] + ADP + H(+). It catalyses the reaction L-threonyl-[protein] + ATP = O-phospho-L-threonyl-[protein] + ADP + H(+). Regulation is a highly complex process involving membrane recruitment, protein-protein interactions, dimerization, and phosphorylation/dephosphorylation events. Ras-GTP recruits RAF1 to the membrane, thereby promoting its activation. The inactive conformation of RAF1 is maintained by autoinhibitory interactions occurring between the N-terminal regulatory and the C-terminal catalytic domains and by the binding of a 14-3-3 protein that contacts two phosphorylation sites, Ser-259 and Ser-621. Upon mitogenic stimulation, Ras and PPP2R1A cooperate to release autoinhibition and the subsequent phosphorylation of activating sites: Ser-338, Tyr-341, Thr-491, and Ser-494, yields a fully active kinase. Through a negative feedback mechanism involving MAPK1/ERK2, RAF1 is phosphorylated on Ser-29, Ser-43, Ser-289, Ser-296, Ser-301 and Ser-642 by MAPK1/ERK2, which yields an inactive, desensitized kinase. The signaling-competent conformation of RAF1 is finally re-established by the coordinated action of PIN1, a prolyl isomerase that converts pSer and pThr residues from the cis to the trans conformation, which is preferentially recognized and dephosphorylated by PPP2R1A. Activated by homodimerization and heterodimerization (with BRAF). Also regulated through association with other proteins such as KSR2, CNKSR1/CNK1, PEBP1/RKIP, PHB/prohibitin and SPRY4. PEBP1/RKIP acts by dissociating RAF1 from its substrates MAP2K1/MEK1 and MAP2K2/MEK2. PHB/prohibitin facilitates the displacement of 14-3-3 from RAF1 by activated Ras, thereby promoting cell membrane localization and phosphorylation of RAF1 at the activating Ser-338. SPRY4 inhibits Ras-independent, but not Ras-dependent, activation of RAF1. CNKSR1/CNK1 regulates Src-mediated RAF1 activation. Its function is as follows. Serine/threonine-protein kinase that acts as a regulatory link between the membrane-associated Ras GTPases and the MAPK/ERK cascade, and this critical regulatory link functions as a switch determining cell fate decisions including proliferation, differentiation, apoptosis, survival and oncogenic transformation. RAF1 activation initiates a mitogen-activated protein kinase (MAPK) cascade that comprises a sequential phosphorylation of the dual-specific MAPK kinases (MAP2K1/MEK1 and MAP2K2/MEK2) and the extracellular signal-regulated kinases (MAPK3/ERK1 and MAPK1/ERK2). The phosphorylated form of RAF1 (on residues Ser-338 and Ser-339, by PAK1) phosphorylates BAD/Bcl2-antagonist of cell death at 'Ser-75'. Phosphorylates adenylyl cyclases: ADCY2, ADCY5 and ADCY6, resulting in their activation. Phosphorylates PPP1R12A resulting in inhibition of the phosphatase activity. Phosphorylates TNNT2/cardiac muscle troponin T. Can promote NF-kB activation and inhibit signal transducers involved in motility (ROCK2), apoptosis (MAP3K5/ASK1 and STK3/MST2), proliferation and angiogenesis (RB1). Can protect cells from apoptosis also by translocating to the mitochondria where it binds BCL2 and displaces BAD/Bcl2-antagonist of cell death. Plays a role in the oncogenic transformation of epithelial cells via repression of the TJ protein, occludin (OCLN) by inducing the up-regulation of a transcriptional repressor SNAI2/SLUG, which induces down-regulation of OCLN. Restricts caspase activation in response to selected stimuli, notably Fas stimulation, pathogen-mediated macrophage apoptosis, and erythroid differentiation. Regulates Rho signaling and migration, and is required for normal wound healing. This Mus musculus (Mouse) protein is RAF proto-oncogene serine/threonine-protein kinase (Raf1).